A 262-amino-acid polypeptide reads, in one-letter code: Adenosylcobinamide-GDP ribazoletransferase (262 aa).

The next 7 membrane-spanning stretches (helical) occupy residues 37-57 (SMPLAGAAIGALAAGTYALCS), 58-78 (MFSFGTPLFLALFLLWLGIWL), 112-132 (VGAFAVLSLACLLSFRWLFLY), 139-159 (IPPALFVAIPLLSRSGAAWLL), 183-203 (AVWALVLAFLALSLLLVFGGV), 205-225 (VWTSAALAVAMALLALGAKPW), and 237-257 (VLGALIEGGETLLWGVVWLLH).

It belongs to the CobS family. It depends on Mg(2+) as a cofactor.

It is found in the cell membrane. It catalyses the reaction alpha-ribazole + adenosylcob(III)inamide-GDP = adenosylcob(III)alamin + GMP + H(+). The enzyme catalyses alpha-ribazole 5'-phosphate + adenosylcob(III)inamide-GDP = adenosylcob(III)alamin 5'-phosphate + GMP + H(+). Its pathway is cofactor biosynthesis; adenosylcobalamin biosynthesis; adenosylcobalamin from cob(II)yrinate a,c-diamide: step 7/7. Joins adenosylcobinamide-GDP and alpha-ribazole to generate adenosylcobalamin (Ado-cobalamin). Also synthesizes adenosylcobalamin 5'-phosphate from adenosylcobinamide-GDP and alpha-ribazole 5'-phosphate. This Geobacillus thermodenitrificans (strain NG80-2) protein is Adenosylcobinamide-GDP ribazoletransferase.